A 402-amino-acid chain; its full sequence is B3 domain-containing protein Os01g0723500 (402 aa).

A DNA-binding region (TF-B3 1) is located at residues 18-121 (RPHFFKVLVG…RFTAMVFDRT (104 aa)). A disordered region spans residues 126 to 203 (EDLMGGGGGD…VKNEEDADEL (78 aa)). Basic and acidic residues predominate over residues 152–162 (DAARPKKDSVG). Polar residues predominate over residues 173 to 186 (SGGQPLQIVDSSWT). Residues 289 to 381 (CVIRMSTMHV…EFRVHIFRVV (93 aa)) constitute a DNA-binding region (TF-B3 2).

The protein localises to the nucleus. This is B3 domain-containing protein Os01g0723500 from Oryza sativa subsp. japonica (Rice).